Here is a 433-residue protein sequence, read N- to C-terminus: Glutamate-1-semialdehyde 2,1-aminomutase (433 aa).

The residue at position 273 (Lys273) is an N6-(pyridoxal phosphate)lysine.

This sequence belongs to the class-III pyridoxal-phosphate-dependent aminotransferase family. HemL subfamily. In terms of assembly, homodimer. It depends on pyridoxal 5'-phosphate as a cofactor.

It localises to the cytoplasm. The enzyme catalyses (S)-4-amino-5-oxopentanoate = 5-aminolevulinate. It functions in the pathway porphyrin-containing compound metabolism; protoporphyrin-IX biosynthesis; 5-aminolevulinate from L-glutamyl-tRNA(Glu): step 2/2. The sequence is that of Glutamate-1-semialdehyde 2,1-aminomutase from Ralstonia pickettii (strain 12J).